The following is a 662-amino-acid chain: DNA ligase (662 aa).

NAD(+) contacts are provided by residues 31–35 (DKDYD) and 79–80 (SL). The active-site N6-AMP-lysine intermediate is lysine 121. Arginine 143, glutamate 177, and lysine 313 together coordinate NAD(+). 4 residues coordinate Zn(2+): cysteine 406, cysteine 409, cysteine 422, and cysteine 428. Residues 586–662 (VLESPFMGKT…LSEEEFENMI (77 aa)) enclose the BRCT domain.

It belongs to the NAD-dependent DNA ligase family. LigA subfamily. The cofactor is Mg(2+). Requires Mn(2+) as cofactor.

The catalysed reaction is NAD(+) + (deoxyribonucleotide)n-3'-hydroxyl + 5'-phospho-(deoxyribonucleotide)m = (deoxyribonucleotide)n+m + AMP + beta-nicotinamide D-nucleotide.. Functionally, DNA ligase that catalyzes the formation of phosphodiester linkages between 5'-phosphoryl and 3'-hydroxyl groups in double-stranded DNA using NAD as a coenzyme and as the energy source for the reaction. It is essential for DNA replication and repair of damaged DNA. This Clostridium perfringens (strain ATCC 13124 / DSM 756 / JCM 1290 / NCIMB 6125 / NCTC 8237 / Type A) protein is DNA ligase.